Consider the following 395-residue polypeptide: MAKEKFDRSKPHVNIGTIGHVDHGKTTLTAAITTVLAKKGFADAQAYDQIDGAPEERERGITISTAHVEYQTDNRHYAHVDCPGHADYVKNMITGAAQMDGAILVVSAADGPMPQTREHILLSRQVGVPYIVVFMNKCDMVDDEELLELVEMEIRDLLTEYEFPGDDIPVIKGSALKALQGEADWEAKIDELMEAVDSYIPTPERDTDKPFMMPVEDVFSITGRGTVATGRVERGQVKVGDEVEVIGIEEESKKVVVTGVEMFRKLLDYAEAGDNIGALLRGVAREDIQRGQVLAKPGSITPHTNFKAETYVLTKEEGGRHTPFFNNYRPQFYFRTTDVTGIVTLPEGTEMVMPGDNIELAVELIAPIAIEDGTKFSIREGGRTVGAGVVSNISK.

The region spanning 10-204 (KPHVNIGTIG…AVDSYIPTPE (195 aa)) is the tr-type G domain. Residues 19 to 26 (GHVDHGKT) are G1. 19 to 26 (GHVDHGKT) is a GTP binding site. Position 26 (Thr26) interacts with Mg(2+). Residues 60–64 (GITIS) are G2. The tract at residues 81–84 (DCPG) is G3. Residues 81–85 (DCPGH) and 136–139 (NKCD) each bind GTP. The segment at 136 to 139 (NKCD) is G4. The segment at 174–176 (SAL) is G5.

Belongs to the TRAFAC class translation factor GTPase superfamily. Classic translation factor GTPase family. EF-Tu/EF-1A subfamily. In terms of assembly, monomer. In terms of processing, phosphorylated on serine and/or threonine residue(s). Dephosphorylated by stp.

Its subcellular location is the cytoplasm. The catalysed reaction is GTP + H2O = GDP + phosphate + H(+). In terms of biological role, GTP hydrolase that promotes the GTP-dependent binding of aminoacyl-tRNA to the A-site of ribosomes during protein biosynthesis. This Listeria innocua serovar 6a (strain ATCC BAA-680 / CLIP 11262) protein is Elongation factor Tu.